We begin with the raw amino-acid sequence, 220 residues long: Zinc-finger homeodomain protein 2 (220 aa).

Residues 1 to 11 (MNFEDQEEDME) are compositionally biased toward acidic residues. The tract at residues 1–40 (MNFEDQEEDMEMSGVNPPCGYDSLSGEGATSSGGGGVGRS) is disordered. A compositionally biased stretch (gly residues) spans 31-40 (SSGGGGVGRS). The ZF-HD dimerization-type zinc-finger motif lies at 49–98 (YRECLKNHAVNIGGHAVDGCCEFMPSGEDGTLDALKCAACGCHRNFHRKE). The segment at 100–160 (ESIGGRAHRV…SSSGGTTKRF (61 aa)) is disordered. Positions 157–220 (TKRFRTKFTA…NNKNSLGKKP (64 aa)) form a DNA-binding region, homeobox; atypical.

Homo or heterodimer. Interacts with ZHD1, ZHD3, ZHD4, ZHD5, ZHD6, ZHD7, ZHD8, ZHD9, ZHD10 and ZHD11. As to expression, mostly expressed in flowers and, to a lower extent, in inflorescence, stems and leaves.

It localises to the nucleus. Its function is as follows. Essential protein. Putative transcription factor. This chain is Zinc-finger homeodomain protein 2 (ZHD1), found in Arabidopsis thaliana (Mouse-ear cress).